The sequence spans 118 residues: Large ribosomal subunit protein uL18 (118 aa).

It belongs to the universal ribosomal protein uL18 family. As to quaternary structure, part of the 50S ribosomal subunit; part of the 5S rRNA/L5/L18/L25 subcomplex. Contacts the 5S and 23S rRNAs.

Its function is as follows. This is one of the proteins that bind and probably mediate the attachment of the 5S RNA into the large ribosomal subunit, where it forms part of the central protuberance. The sequence is that of Large ribosomal subunit protein uL18 from Rickettsia akari (strain Hartford).